Consider the following 545-residue polypeptide: MAAKDVKFGDSARKKMLVGVNVLADAVKATLGPKGRNVVLAKSFGAPTITKDGVSVAKEIELKDAFENMGAQLVKEVASKANDAAGDGTTTATVLAQSIVNEGLKAVAAGMNPMDLKRGIDKATAAVVAELKNLSKPCADSKAIAQVGTISANSDSSIGEIIAEAMEKVGKEGVITVEEGSGLENELSVVEGMQFDRGYLSPYFVNKPDTMVAELEGPLLLLVDKKISTSRAAASTERASAGRPLLIVAEDVEGEALATLVVNNMRGIVKVAAVKAPGFGDRRKAMLQDIAVLTGGQVISEEIGVSLETATLEHLGNAKRVILSKENTTIIDGAGADTEIEARVKQIRAQIEETSSDYDREKLQERLAKLAGGVAVIKVGAGTEVEMKEKKARVEDALHATRAAVEEGVVPGGGVALVRALNAIVDLKGDNEDQNVGIALLRRAVESPLRQITANAGDEPSVVANKVKQGSGNFGYNAATGEYGDMIEMGILDPAKVTRSALQAAASIGGLMITTEAMIADAPSDAPAGGGMPDMGGMGGMGGMM.

ATP contacts are provided by residues 30–33 (TLGP), lysine 51, 87–91 (DGTTT), glycine 413, 477–479 (NAA), and aspartate 493.

Belongs to the chaperonin (HSP60) family. As to quaternary structure, forms a cylinder of 14 subunits composed of two heptameric rings stacked back-to-back. Interacts with the co-chaperonin GroES.

It localises to the cytoplasm. The catalysed reaction is ATP + H2O + a folded polypeptide = ADP + phosphate + an unfolded polypeptide.. Its function is as follows. Together with its co-chaperonin GroES, plays an essential role in assisting protein folding. The GroEL-GroES system forms a nano-cage that allows encapsulation of the non-native substrate proteins and provides a physical environment optimized to promote and accelerate protein folding. The sequence is that of Chaperonin GroEL from Pseudomonas putida (Arthrobacter siderocapsulatus).